Reading from the N-terminus, the 375-residue chain is Trichodiene synthase (375 aa).

This sequence belongs to the trichodiene synthase family.

The enzyme catalyses (2E,6E)-farnesyl diphosphate = trichodiene + diphosphate. The protein operates within sesquiterpene biosynthesis; trichothecene biosynthesis. In terms of biological role, TS is a member of the terpene cyclase group of enzymes. It catalyzes the isomerization and cyclization of farnesyl pyro-phosphate to form trichodiene, the first cyclic intermediate in the biosynthetic pathway for trichothecenes. It serves to branch trichothecene biosynthesis from the isoprenoid pathway. This Gibberella zeae (strain ATCC MYA-4620 / CBS 123657 / FGSC 9075 / NRRL 31084 / PH-1) (Wheat head blight fungus) protein is Trichodiene synthase (TRI5).